We begin with the raw amino-acid sequence, 292 residues long: Sulfofructosephosphate aldolase (292 aa).

Catalysis depends on Lys193, which acts as the Schiff-base intermediate with substrate.

It belongs to the aldolase LacD family. As to quaternary structure, homotetramer.

It catalyses the reaction 6-deoxy-6-sulfo-D-fructose 1-phosphate = (2S)-3-sulfolactaldehyde + dihydroxyacetone phosphate. In terms of biological role, cleaves 6-deoxy-6-sulfo-D-fructose 1-phosphate (SFP) to form dihydroxyacetone phosphate (DHAP) and 3-sulfolactaldehyde (SLA). This is Sulfofructosephosphate aldolase (yihT) from Salmonella typhi.